Consider the following 264-residue polypeptide: Glutamate racemase (264 aa).

Residues 10-11 (DS) and 42-43 (YG) each bind substrate. Residue Cys73 is the Proton donor/acceptor of the active site. 74 to 75 (NT) is a substrate binding site. Catalysis depends on Cys183, which acts as the Proton donor/acceptor. 184–185 (TH) is a substrate binding site.

It belongs to the aspartate/glutamate racemases family.

The catalysed reaction is L-glutamate = D-glutamate. Its pathway is cell wall biogenesis; peptidoglycan biosynthesis. In terms of biological role, provides the (R)-glutamate required for cell wall biosynthesis. In Streptococcus equi subsp. zooepidemicus (strain H70), this protein is Glutamate racemase.